Reading from the N-terminus, the 512-residue chain is Cytochrome P450 98A1 (512 aa).

A helical membrane pass occupies residues 3 to 23 (ASLLLSVALAVVLIPLSLALL). Cys441 serves as a coordination point for heme.

The protein belongs to the cytochrome P450 family. Heme serves as cofactor.

The protein localises to the membrane. This chain is Cytochrome P450 98A1 (CYP98A1), found in Sorghum bicolor (Sorghum).